A 284-amino-acid polypeptide reads, in one-letter code: Two-pore potassium channel 4 (284 aa).

The segment at 1 to 21 (MEEENLLNENLLHPNESSPEE) is disordered. Over 1-31 (MEEENLLNENLLHPNESSPEETQVTTVSKSK) the chain is Cytoplasmic. A helical membrane pass occupies residues 32 to 52 (WTILVLAMILLLVYLTFGVCT). Positions 70–89 (DAFYFSIVTFSTVGYGDIVP) form an intramembrane region, pore-forming. A helical membrane pass occupies residues 93 to 113 (TTKILTIVLVSTGVVFLDYLL). Topologically, residues 114 to 156 (NRVVSHVLSLQENAILDRINKTRNRAIRDHIAEDGKIRLKWKL) are cytoplasmic. A helical transmembrane segment spans residues 157–177 (CLAFCAVGLCVGSGALFLHVF). Residues 184–203 (DSVYLSVISVTTVGYGDKTF) constitute an intramembrane region (pore-forming). Residues 211 to 231 (FAVFWLLLSTIAMATLFLYLA) traverse the membrane as a helical segment. Over 232 to 284 (EMRIDRTTVMKLPPSESEFIVFKLRESGRISEDDIKQIVREFENLEEVPSSGS) the chain is Cytoplasmic.

Belongs to the two pore domain potassium channel (TC 1.A.1.7) family. As to quaternary structure, homodimer. As to expression, predominantly expressed in pollen.

It localises to the cell membrane. Functionally, voltage-independent, instantaneously activating, potassium-selective plasma membrane ion channel. Open rectifier. Regulated by cytoplasmic pH and extra-cellular calcium. Has some permeability for Rb(+) and NH(4)(+), but none for Na(+) or Li(+). This chain is Two-pore potassium channel 4 (TPK4), found in Arabidopsis thaliana (Mouse-ear cress).